The sequence spans 216 residues: Protein-L-isoaspartate O-methyltransferase (216 aa).

The active site involves Ser60.

It belongs to the methyltransferase superfamily. L-isoaspartyl/D-aspartyl protein methyltransferase family.

Its subcellular location is the cytoplasm. The catalysed reaction is [protein]-L-isoaspartate + S-adenosyl-L-methionine = [protein]-L-isoaspartate alpha-methyl ester + S-adenosyl-L-homocysteine. Catalyzes the methyl esterification of L-isoaspartyl residues in peptides and proteins that result from spontaneous decomposition of normal L-aspartyl and L-asparaginyl residues. It plays a role in the repair and/or degradation of damaged proteins. This is Protein-L-isoaspartate O-methyltransferase from Methanococcus aeolicus (strain ATCC BAA-1280 / DSM 17508 / OCM 812 / Nankai-3).